Here is a 332-residue protein sequence, read N- to C-terminus: Cysteine and histidine-rich domain-containing protein 1 (332 aa).

A2 bears the N-acetylalanine mark. Positions 2 to 77 (ALLCYNRGCG…KPPESVKPEV (76 aa)) are interaction with PPP5C. Zn(2+)-binding residues include C5, C10, C24, H27, C42, and C43. 2 consecutive CHORD domains span residues 5–64 (CYNR…KGRH) and 157–216 (CKNG…KGKH). A Phosphothreonine modification is found at T47. S51 bears the Phosphoserine mark. Positions 59, 64, 157, 162, 176, 179, 194, 195, 211, and 216 each coordinate Zn(2+). The disordered stretch occupies residues 62-81 (GRHNSEKPPESVKPEVKTTE). Over residues 64-81 (HNSEKPPESVKPEVKTTE) the composition is skewed to basic and acidic residues. The segment at 65–316 (NSEKPPESVK…AEPMQWASLE (252 aa)) is interaction with HSP90AA1 and HSP90AB1. Residues 227–316 (VVPCRHDWHQ…AEPMQWASLE (90 aa)) enclose the CS domain.

As to quaternary structure, interacts with HSP90AA1, HSP90AB1, PPP5C, ROCK1 and ROCK2.

Regulates centrosome duplication, probably by inhibiting the kinase activity of ROCK2. Proposed to act as co-chaperone for HSP90. May play a role in the regulation of NOD1 via a HSP90 chaperone complex. In vitro, has intrinsic chaperone activity. This function may be achieved by inhibiting association of ROCK2 with NPM1. Plays a role in ensuring the localization of the tyrosine kinase receptor EGFR to the plasma membrane, and thus ensures the subsequent regulation of EGFR activity and EGF-induced actin cytoskeleton remodeling. Involved in stress response. Prevents tumorigenesis. This chain is Cysteine and histidine-rich domain-containing protein 1 (CHORDC1), found in Pongo abelii (Sumatran orangutan).